The sequence spans 687 residues: MKTKIIIYICIWATAWAIPVPQLVPLERDIVEKSADVPFLAHPGTAAQNELHINNATNDDSPKGSELGRQVHSNGGYERDRNGSESIAVGGKSSPTQPILANAQGNSAKEREDVETYGHDGIHAGGENSTANGIRGQVGIAENAEEAKESKVHGQPHQDTKTGLASDTSQNGDATLVQENEPQVAGSKNSTNHEVGTHGSGVAAQETTPQREGEGSENQGAEVTPSIGEGAGLDNTEGSPSGNGIEEDEDTGSGDGVGADAGDGRESHDGTEGHEGQSSGGNNDNRGQGSVSTEDDDSKEQEGSPNGRGGDNTSSSEETGIEEGDGTQTTQDNQNLSPTEGGIISQAEACPSGQSQNQGLETEGSSTGNKSSITKESGKLSGSKDSNGHHGMELDKRNSPKQGESDKPQGAAEKSDTHNNMGHSRIGSSSNSDGHDSYDFDDESMQGDDPNSSDESNGSDGSDDANSESAIENGNHGDASYTSDESSDNGSDSDSHAGEDDSSDDTSDTDDSDSNGDDDSESKDKDESDNSNHDNDSDSESKSDSSDSDSDSSDSSDSSDSSDSSETSDSSDSSDTSDSSDSSDSSDSSNSSDTSDSSDSSDGDSSDGDSSDSDSSDSDSSNSSDSDSSDSSDSSSSDSSDSDSDSKDSTSDSSDDNSKSGNGNSDSDSDSDSDSEGSDSNHSTSDD.

The signal sequence occupies residues 1–17 (MKTKIIIYICIWATAWA). Positions 54 to 113 (NNATNDDSPKGSELGRQVHSNGGYERDRNGSESIAVGGKSSPTQPILANAQGNSAKERED) are disordered. An N-linked (GlcNAc...) asparagine glycan is attached at Asn-55. Residue Thr-57 is modified to Phosphothreonine; by CK2. Residue Asn-82 is glycosylated (N-linked (GlcNAc...) asparagine). Residues 93–107 (SSPTQPILANAQGNS) are compositionally biased toward polar residues. N-linked (GlcNAc...) asparagine glycosylation occurs at Asn-128. Positions 146–160 (EAKESKVHGQPHQDT) are enriched in basic and acidic residues. Residues 146–687 (EAKESKVHGQ…SDSNHSTSDD (542 aa)) are disordered. Polar residues predominate over residues 161-194 (KTGLASDTSQNGDATLVQENEPQVAGSKNSTNHE). Asn-189 carries N-linked (GlcNAc...) asparagine glycosylation. A Phosphoserine; by CK2 modification is found at Ser-226. Ser-253 is modified (phosphoserine; by CK1). The segment covering 262-275 (GDGRESHDGTEGHE) has biased composition (basic and acidic residues). Residues 276–292 (GQSSGGNNDNRGQGSVS) show a composition bias toward polar residues. Position 278 is a phosphoserine; by CK1 (Ser-278). Ser-292 carries the post-translational modification Phosphoserine; by CK2. Ser-298 carries the phosphoserine; by CK1 modification. Asn-312 carries N-linked (GlcNAc...) asparagine glycosylation. Position 315 is a phosphoserine; by CK2 (Ser-315). 2 positions are modified to phosphothreonine; by CK2: Thr-319 and Thr-329. Residues Ser-337 and Ser-345 each carry the phosphoserine; by CK2 modification. The segment covering 352 to 375 (SGQSQNQGLETEGSSTGNKSSITK) has biased composition (polar residues). Ser-366 is modified (phosphoserine; by CK1). Asn-369 carries N-linked (GlcNAc...) asparagine glycosylation. A compositionally biased stretch (basic and acidic residues) spans 386–417 (SNGHHGMELDKRNSPKQGESDKPQGAAEKSDT). Residues 418–432 (HNNMGHSRIGSSSNS) show a composition bias toward polar residues. Over residues 447-460 (GDDPNSSDESNGSD) the composition is skewed to low complexity. Over residues 500–521 (DDSSDDTSDTDDSDSNGDDDSE) the composition is skewed to acidic residues. Basic and acidic residues predominate over residues 522-545 (SKDKDESDNSNHDNDSDSESKSDS). Residues 555–598 (SSDSSDSSDSSETSDSSDSSDTSDSSDSSDSSDSSNSSDTSDSS) are compositionally biased toward low complexity. Residues 599-617 (DSSDGDSSDGDSSDSDSSD) are compositionally biased toward acidic residues. Over residues 618 to 639 (SDSSNSSDSDSSDSSDSSSSDS) the composition is skewed to low complexity. A compositionally biased stretch (acidic residues) spans 667 to 677 (SDSDSDSDSEG). Low complexity predominate over residues 678–687 (SDSNHSTSDD).

As to quaternary structure, interacts with FBLN7. In terms of processing, DSP is glycosylated. In terms of tissue distribution, specifically expressed in teeth, mainly in odontoblasts and transiently in pre-ameloblasts.

It localises to the secreted. It is found in the extracellular space. The protein localises to the extracellular matrix. DSP may be an important factor in dentinogenesis. DPP may bind high amount of calcium and facilitate initial mineralization of dentin matrix collagen as well as regulate the size and shape of the crystals. The polypeptide is Dentin sialophosphoprotein (Dspp) (Rattus norvegicus (Rat)).